We begin with the raw amino-acid sequence, 116 residues long: Large ribosomal subunit protein bL17 (116 aa).

This sequence belongs to the bacterial ribosomal protein bL17 family. As to quaternary structure, part of the 50S ribosomal subunit. Contacts protein L32.

The sequence is that of Large ribosomal subunit protein bL17 from Synechococcus sp. (strain JA-3-3Ab) (Cyanobacteria bacterium Yellowstone A-Prime).